The primary structure comprises 230 residues: Cytidylate kinase (230 aa).

An ATP-binding site is contributed by 12–20 (GPSGAGKGT).

Belongs to the cytidylate kinase family. Type 1 subfamily.

It is found in the cytoplasm. The catalysed reaction is CMP + ATP = CDP + ADP. It catalyses the reaction dCMP + ATP = dCDP + ADP. The polypeptide is Cytidylate kinase (Shewanella baltica (strain OS223)).